A 270-amino-acid polypeptide reads, in one-letter code: Putative phosphoenolpyruvate synthase regulatory protein (270 aa).

150 to 157 lines the ADP pocket; it reads GVSRCGKT.

The protein belongs to the pyruvate, phosphate/water dikinase regulatory protein family. PSRP subfamily.

The enzyme catalyses [pyruvate, water dikinase] + ADP = [pyruvate, water dikinase]-phosphate + AMP + H(+). It carries out the reaction [pyruvate, water dikinase]-phosphate + phosphate + H(+) = [pyruvate, water dikinase] + diphosphate. In terms of biological role, bifunctional serine/threonine kinase and phosphorylase involved in the regulation of the phosphoenolpyruvate synthase (PEPS) by catalyzing its phosphorylation/dephosphorylation. This is Putative phosphoenolpyruvate synthase regulatory protein from Shewanella frigidimarina (strain NCIMB 400).